The sequence spans 189 residues: uncharacterized protein (189 aa).

The next 4 membrane-spanning stretches (helical) occupy residues 49–69, 78–98, 102–122, and 124–144; these read LLGILKLITFPVLCAAGLFVF, LFHKSFQGCSGYVLATFLSLF, LTIVGIVSCITWAPGFIFPMI, and VSIAFATVETCFQIYTHLFPA. Positions 165–189 are disordered; it reads SSSAPDLNYPSLPTQSASPSQRFSA.

The protein belongs to the chlamydial CPn_0442/CT_006/TC_0274 family.

It is found in the cell membrane. This is an uncharacterized protein from Chlamydia trachomatis serovar D (strain ATCC VR-885 / DSM 19411 / UW-3/Cx).